The following is a 99-amino-acid chain: MMMNSFFPAMALMVLVGCSTPSPVQKAQRVKVDPLRSLNMEALCKDQAAKRYNTGEQKIDVTAFEQFQGSYEMRGYTFRKEQFVCSFDADGHFLHLSMR.

The N-terminal stretch at 1–17 (MMMNSFFPAMALMVLVG) is a signal peptide. Residue Cys18 is the site of N-palmitoyl cysteine attachment. The S-diacylglycerol cysteine moiety is linked to residue Cys18.

It localises to the cell membrane. This is an uncharacterized protein from Escherichia coli O157:H7.